Here is a 351-residue protein sequence, read N- to C-terminus: Cobalt-precorrin-5B C(1)-methyltransferase (351 aa).

The protein belongs to the CbiD family.

The catalysed reaction is Co-precorrin-5B + S-adenosyl-L-methionine = Co-precorrin-6A + S-adenosyl-L-homocysteine. It functions in the pathway cofactor biosynthesis; adenosylcobalamin biosynthesis; cob(II)yrinate a,c-diamide from sirohydrochlorin (anaerobic route): step 6/10. Functionally, catalyzes the methylation of C-1 in cobalt-precorrin-5B to form cobalt-precorrin-6A. The polypeptide is Cobalt-precorrin-5B C(1)-methyltransferase (Thermosipho africanus (strain TCF52B)).